The chain runs to 212 residues: Large ribosomal subunit protein bL25 (212 aa).

The segment at 183–212 (HDLPVASIHKPKGAKADDAEGEEGEEGGEE) is disordered. Acidic residues predominate over residues 201–212 (AEGEEGEEGGEE).

It belongs to the bacterial ribosomal protein bL25 family. CTC subfamily. Part of the 50S ribosomal subunit; part of the 5S rRNA/L5/L18/L25 subcomplex. Contacts the 5S rRNA. Binds to the 5S rRNA independently of L5 and L18.

Its function is as follows. This is one of the proteins that binds to the 5S RNA in the ribosome where it forms part of the central protuberance. This Marinobacter nauticus (strain ATCC 700491 / DSM 11845 / VT8) (Marinobacter aquaeolei) protein is Large ribosomal subunit protein bL25.